The primary structure comprises 265 residues: Diphthine synthase (265 aa).

S-adenosyl-L-methionine-binding positions include Leu-9, Asp-85, Ile-88, Thr-113–Ala-114, Leu-168, Ala-211, and His-236.

Belongs to the diphthine synthase family. Homodimer.

The enzyme catalyses 2-[(3S)-amino-3-carboxypropyl]-L-histidyl-[translation elongation factor 2] + 3 S-adenosyl-L-methionine = diphthine-[translation elongation factor 2] + 3 S-adenosyl-L-homocysteine + 3 H(+). Its pathway is protein modification; peptidyl-diphthamide biosynthesis. Functionally, S-adenosyl-L-methionine-dependent methyltransferase that catalyzes the trimethylation of the amino group of the modified target histidine residue in translation elongation factor 2 (EF-2), to form an intermediate called diphthine. The three successive methylation reactions represent the second step of diphthamide biosynthesis. The protein is Diphthine synthase of Halorubrum lacusprofundi (strain ATCC 49239 / DSM 5036 / JCM 8891 / ACAM 34).